The chain runs to 649 residues: Macrolide export ATP-binding/permease protein MacB 1 (649 aa).

In terms of domain architecture, ABC transporter spans 5–243 (LELEGIRRSY…AAAELMSLTP (239 aa)). 41 to 48 (GASGSGKS) is an ATP binding site. The next 5 helical transmembrane spans lie at 274 to 294 (ALTM…LVVG), 420 to 440 (VVGQ…VVAE), 524 to 544 (LFLT…VMNI), 578 to 598 (VLVC…IGLI), and 608 to 628 (IAFP…IGVV).

The protein belongs to the ABC transporter superfamily. Macrolide exporter (TC 3.A.1.122) family. Homodimer. Part of the tripartite efflux system MacAB-TolC, which is composed of an inner membrane transporter, MacB, a periplasmic membrane fusion protein, MacA, and an outer membrane component, TolC. The complex forms a large protein conduit and can translocate molecules across both the inner and outer membranes. Interacts with MacA.

The protein resides in the cell inner membrane. Functionally, part of the tripartite efflux system MacAB-TolC. MacB is a non-canonical ABC transporter that contains transmembrane domains (TMD), which form a pore in the inner membrane, and an ATP-binding domain (NBD), which is responsible for energy generation. Confers resistance against macrolides. The polypeptide is Macrolide export ATP-binding/permease protein MacB 1 (Yersinia pestis bv. Antiqua (strain Antiqua)).